A 348-amino-acid polypeptide reads, in one-letter code: Holliday junction branch migration complex subunit RuvB (348 aa).

A large ATPase domain (RuvB-L) region spans residues 1 to 184 (MTLNRDMVSP…FGIVQRLEFY (184 aa)). ATP is bound by residues leucine 23, arginine 24, glycine 65, lysine 68, threonine 69, threonine 70, arginine 174, tyrosine 184, and arginine 221. Threonine 69 provides a ligand contact to Mg(2+). The interval 185-255 (AVDHLVLIVE…VAQKALDLLD (71 aa)) is small ATPAse domain (RuvB-S). The head domain (RuvB-H) stretch occupies residues 258–348 (SHGFDTMDRK…QEVSDLFPNE (91 aa)). DNA contacts are provided by arginine 294, arginine 313, and arginine 318.

This sequence belongs to the RuvB family. As to quaternary structure, homohexamer. Forms an RuvA(8)-RuvB(12)-Holliday junction (HJ) complex. HJ DNA is sandwiched between 2 RuvA tetramers; dsDNA enters through RuvA and exits via RuvB. An RuvB hexamer assembles on each DNA strand where it exits the tetramer. Each RuvB hexamer is contacted by two RuvA subunits (via domain III) on 2 adjacent RuvB subunits; this complex drives branch migration. In the full resolvosome a probable DNA-RuvA(4)-RuvB(12)-RuvC(2) complex forms which resolves the HJ.

It localises to the cytoplasm. The catalysed reaction is ATP + H2O = ADP + phosphate + H(+). In terms of biological role, the RuvA-RuvB-RuvC complex processes Holliday junction (HJ) DNA during genetic recombination and DNA repair, while the RuvA-RuvB complex plays an important role in the rescue of blocked DNA replication forks via replication fork reversal (RFR). RuvA specifically binds to HJ cruciform DNA, conferring on it an open structure. The RuvB hexamer acts as an ATP-dependent pump, pulling dsDNA into and through the RuvAB complex. RuvB forms 2 homohexamers on either side of HJ DNA bound by 1 or 2 RuvA tetramers; 4 subunits per hexamer contact DNA at a time. Coordinated motions by a converter formed by DNA-disengaged RuvB subunits stimulates ATP hydrolysis and nucleotide exchange. Immobilization of the converter enables RuvB to convert the ATP-contained energy into a lever motion, pulling 2 nucleotides of DNA out of the RuvA tetramer per ATP hydrolyzed, thus driving DNA branch migration. The RuvB motors rotate together with the DNA substrate, which together with the progressing nucleotide cycle form the mechanistic basis for DNA recombination by continuous HJ branch migration. Branch migration allows RuvC to scan DNA until it finds its consensus sequence, where it cleaves and resolves cruciform DNA. This Nitrosococcus oceani (strain ATCC 19707 / BCRC 17464 / JCM 30415 / NCIMB 11848 / C-107) protein is Holliday junction branch migration complex subunit RuvB.